Reading from the N-terminus, the 197-residue chain is Probable GTP-binding protein EngB (197 aa).

The region spanning 25-197 is the EngB-type G domain; it reads SAPEIAFAGR…VRDEFFKFTR (173 aa). GTP-binding positions include 33–40, 60–64, 79–82, 146–149, and 177–179; these read GRSNVGKS, GCTRQ, DLPG, TKID, and MSI. 2 residues coordinate Mg(2+): serine 40 and threonine 62.

This sequence belongs to the TRAFAC class TrmE-Era-EngA-EngB-Septin-like GTPase superfamily. EngB GTPase family. Requires Mg(2+) as cofactor.

Functionally, necessary for normal cell division and for the maintenance of normal septation. The chain is Probable GTP-binding protein EngB from Wolbachia sp. subsp. Drosophila simulans (strain wRi).